The sequence spans 495 residues: Zinc finger and SCAN domain-containing protein 5B (495 aa).

The interval 1–40 (MAANWTLSWGQGGPCNSPGSDTPRSVASPETQLGNHDRNP) is disordered. Over residues 17–34 (SPGSDTPRSVASPETQLG) the composition is skewed to polar residues. The 83-residue stretch at 44-126 (HMNFRMFSCP…DLLRNNRRPK (83 aa)) folds into the SCAN box domain. Disordered regions lie at residues 150–183 (APASVRDDPRDVSSQWASSVNQMHPGTGQARREQ) and 227–347 (ENRE…PDGQ). Residues 161–173 (VSSQWASSVNQMH) show a composition bias toward polar residues. The segment covering 250-262 (RAKEGKEPQKRAS) has biased composition (basic and acidic residues). A compositionally biased stretch (polar residues) spans 292–310 (NLSSPKRSKPDASSISQEE). 5 C2H2-type zinc fingers span residues 355 to 377 (FACDVCNKSFKYFSQLSIHRRSH), 383 to 405 (FQCDLCRKRFLQPSDLRVHQRVH), 411 to 433 (YMCDVCQKRFAHESTLQGHKRIH), 439 to 461 (FKCKYCSKVFSHKGNLNVHQRTH), and 467 to 489 (YKCPTCQKAFRQLGTFKRHLKTH).

Its subcellular location is the nucleus. Its function is as follows. May be involved in transcriptional regulation. The sequence is that of Zinc finger and SCAN domain-containing protein 5B (ZSCAN5B) from Homo sapiens (Human).